We begin with the raw amino-acid sequence, 183 residues long: Inosine triphosphate pyrophosphatase (183 aa).

Threonine 8 to lysine 13 provides a ligand contact to ITP. Glutamate 36 contacts Mg(2+). Residues lysine 48, aspartate 64 to threonine 65, lysine 81, phenylalanine 140 to aspartate 143, lysine 161, and histidine 166 to arginine 167 each bind ITP.

The protein belongs to the HAM1 NTPase family. As to quaternary structure, homodimer. It depends on Mg(2+) as a cofactor. The cofactor is Mn(2+).

The protein localises to the cytoplasm. Its subcellular location is the nucleus. It catalyses the reaction ITP + H2O = IMP + diphosphate + H(+). It carries out the reaction dITP + H2O = dIMP + diphosphate + H(+). The catalysed reaction is XTP + H2O = XMP + diphosphate + H(+). In terms of biological role, pyrophosphatase that hydrolyzes non-canonical purine nucleotides such as inosine triphosphate (ITP), deoxyinosine triphosphate (dITP) or xanthosine 5'-triphosphate (XTP) to their respective monophosphate derivatives. The enzyme does not distinguish between the deoxy- and ribose forms. Probably excludes non-canonical purines from RNA and DNA precursor pools, thus preventing their incorporation into RNA and DNA and avoiding chromosomal lesions. The protein is Inosine triphosphate pyrophosphatase of Ajellomyces capsulatus (strain G186AR / H82 / ATCC MYA-2454 / RMSCC 2432) (Darling's disease fungus).